Here is a 435-residue protein sequence, read N- to C-terminus: Secreted RxLR effector protein 35 (435 aa).

A signal peptide spans 1-22 (MRGAYYIIIALCVVASSQVAAG). The RxLR-dEER motif lies at 48–65 (RFLRGSRVVHDDLANEER). The segment at 336-357 (RPKRTTDGNTGTISLPTKPTKT) is disordered. A compositionally biased stretch (polar residues) spans 342–354 (DGNTGTISLPTKP).

It belongs to the RxLR effector family.

The protein resides in the secreted. It localises to the host nucleus. Functionally, secreted effector that acts as an elicitor that induces cell death in host plant cells. The polypeptide is Secreted RxLR effector protein 35 (Plasmopara viticola (Downy mildew of grapevine)).